The chain runs to 403 residues: Argininosuccinate synthase (403 aa).

ATP is bound by residues A10–S18 and A37. Y89 serves as a coordination point for L-citrulline. G119 lines the ATP pocket. Positions 121, 125, and 126 each coordinate L-aspartate. N125 serves as a coordination point for L-citrulline. L-citrulline contacts are provided by R129, S178, S187, E263, and Y275.

This sequence belongs to the argininosuccinate synthase family. Type 1 subfamily. Homotetramer.

Its subcellular location is the cytoplasm. The catalysed reaction is L-citrulline + L-aspartate + ATP = 2-(N(omega)-L-arginino)succinate + AMP + diphosphate + H(+). It participates in amino-acid biosynthesis; L-arginine biosynthesis; L-arginine from L-ornithine and carbamoyl phosphate: step 2/3. This Idiomarina loihiensis (strain ATCC BAA-735 / DSM 15497 / L2-TR) protein is Argininosuccinate synthase.